The primary structure comprises 912 residues: Tubulin polyglutamylase TTLL7 (912 aa).

Residues 38–390 (KGIITANVAG…RTSDKRKNLA (353 aa)) form the TTL domain. Residues K160, 166 to 167 (MG), 188 to 191 (QEYI), and 201 to 203 (KFD) contribute to the ATP site. Residue R227 coordinates L-glutamate. An ATP-binding site is contributed by 249–250 (TN). 3 residues coordinate L-glutamate: Y251, S252, and K271. Positions 336, 349, and 351 each coordinate Mg(2+). Residue K367 participates in L-glutamate binding. The interval 388–450 (NLAKQKAEAQ…VSQEEHENRH (63 aa)) is c-MTBD region. 2 disordered regions span residues 547-570 (YGSS…ENEK) and 658-688 (PTSA…STNT). Positions 549–563 (SSDSSYDSSSSSSNS) are enriched in low complexity. Polar residues predominate over residues 659–671 (TSASRSHSLNRAS).

It belongs to the tubulin--tyrosine ligase family. Interacts with both alpha- and beta-tubulin (via C-terminal tubulin tails). The cofactor is Mg(2+). In terms of tissue distribution, highly expressed in brain, testis and trachea. Expressed in brain, heart, kidney, liver, lung, muscle and trachea. In the brain, highly expressed in hippocampus, thalamus, olfactory bulb and cerebellum cortex, corpus callosum and striatum.

The protein localises to the cell projection. The protein resides in the cilium. It localises to the cytoplasm. Its subcellular location is the cytoskeleton. It is found in the cilium basal body. The protein localises to the dendrite. The protein resides in the perikaryon. It carries out the reaction L-glutamyl-[protein] + L-glutamate + ATP = gamma-L-glutamyl-L-glutamyl-[protein] + ADP + phosphate + H(+). It catalyses the reaction (L-glutamyl)(n)-gamma-L-glutamyl-L-glutamyl-[protein] + L-glutamate + ATP = (L-glutamyl)(n+1)-gamma-L-glutamyl-L-glutamyl-[protein] + ADP + phosphate + H(+). Polyglutamylase which modifies tubulin, generating polyglutamate side chains of variable lengths on the gamma-carboxyl group of specific glutamate residues within the C-terminal tail of tubulin. Mediates both ATP-dependent initiation and elongation steps of the polyglutamylation reaction. Preferentially modifies the beta-tubulin tail over an alpha-tail. Competes with monoglycylase TTLL3 for modification site on beta-tubulin substrate, thereby creating an anticorrelation between glycylation and glutamylation reactions. Required for neurite growth; responsible for the strong increase in tubulin polyglutamylation during postnatal neuronal maturation. This Mus musculus (Mouse) protein is Tubulin polyglutamylase TTLL7.